Here is a 341-residue protein sequence, read N- to C-terminus: MNKTLIALAVSAAAVATGAYADGINQSGDKAGSTVYSAKGTSLEVGGRAEARLSLKDGKAQDNSRVRLNFLGKAEINDSLYGVGFYEGEFTTNDQGKNASNNSLDNRYTYAGIGGTYGEVTYGKNDGALGVITDFTDIMSYHGNTAAEKIAVADRVDNMLAYKGQFGDLGVKASYRFADRNAVDAMGNVVTETNAAKYSDNGEDGYSLSAIYTFGDTGFNVGAGYADQDDQNEYMLAASYRMENLYFAGLFTDGELAKDVDYTGYELAAGYKLGQAAFTATYNNAETAKETSADNFAIDATYYFKPNFRSYISYQFNLLDSDKVGKVASEDELAIGLRYDF.

Positions Met1–Ala21 are cleaved as a signal peptide.

Belongs to the Gram-negative porin family. In terms of assembly, homotrimer.

It is found in the cell outer membrane. In terms of biological role, forms pores that allow passive diffusion of small molecules across the outer membrane. The polypeptide is Outer membrane protein U (ompU) (Vibrio cholerae serotype O1 (strain ATCC 39315 / El Tor Inaba N16961)).